Reading from the N-terminus, the 257-residue chain is Snake venom serine protease KN11 (257 aa).

Residues 1 to 18 (MVLIRVLANLLILQLSYA) form the signal peptide. The propeptide occupies 19–24 (QKSSEL). Positions 25 to 248 (VTGGHPCNIN…HLDWIKSIIA (224 aa)) constitute a Peptidase S1 domain. Cystine bridges form between Cys-31-Cys-162, Cys-49-Cys-65, Cys-97-Cys-255, Cys-141-Cys-209, Cys-173-Cys-188, and Cys-199-Cys-224. Residues His-64 and Asp-109 each act as charge relay system in the active site. N-linked (GlcNAc...) asparagine glycans are attached at residues Asn-120 and Asn-121. Ser-203 serves as the catalytic Charge relay system.

It belongs to the peptidase S1 family. Snake venom subfamily. In terms of assembly, monomer. As to expression, expressed by the venom gland.

It localises to the secreted. In terms of biological role, snake venom serine protease that may act in the hemostasis system of the prey. In Trimeresurus stejnegeri (Chinese green tree viper), this protein is Snake venom serine protease KN11.